The sequence spans 199 residues: 5'-deoxynucleotidase YfbR (199 aa).

Residues 18–19 and H33 contribute to the substrate site; that span reads RW. An HD domain is found at 30 to 142; it reads VSEHSLQVAM…VKQADALCAY (113 aa). 3 residues coordinate a divalent metal cation: H33, H68, and D69. Substrate is bound by residues D69, 77–80, and D137; that span reads DLPT. D137 contributes to the a divalent metal cation binding site.

The protein belongs to the 5DNU family. Homodimer. It depends on a divalent metal cation as a cofactor.

The protein localises to the cytoplasm. It carries out the reaction a 2'-deoxyribonucleoside 5'-phosphate + H2O = a 2'-deoxyribonucleoside + phosphate. Its function is as follows. Catalyzes the strictly specific dephosphorylation of 2'-deoxyribonucleoside 5'-monophosphates. This Shigella flexneri serotype 5b (strain 8401) protein is 5'-deoxynucleotidase YfbR.